A 310-amino-acid polypeptide reads, in one-letter code: MSQKRKVAIIGSGNIGTDLMIKILRNAKHLEMAAMVGIDQASDGLARAARMGVATTADGVDGLTRLPVFQDIDFVFDATSAGAHVKNDAFLRQHKASLRMIDLTPAAIGPYCVPVVNLEQHLQAINVNMVTCGGQATIPMVAAVSRVAKVHYAEIVASIASKSAGPGTRANIDEFTETTSKAIEVIGGATKGKAIIIMNPAEPPLMMRDTVYVLSETADQKQIAASIEEMAASVQAYVPGYRLKQQVQFEQVHNLTLPGQGTFTGLKTSVFLEVEGAAHYLPAYAGNLDIMTSAALATAERMAQAMGPLA.

Residue 12 to 15 (SGNI) coordinates NAD(+). Residue C132 is the Acyl-thioester intermediate of the active site. Residues 163-171 (SAGPGTRAN) and N287 contribute to the NAD(+) site.

The protein belongs to the acetaldehyde dehydrogenase family.

It carries out the reaction acetaldehyde + NAD(+) + CoA = acetyl-CoA + NADH + H(+). This chain is Acetaldehyde dehydrogenase 1, found in Pseudomonas putida (strain W619).